A 166-amino-acid polypeptide reads, in one-letter code: MFKKLFGKGKEVQKDIAIYAPLTGEYVKIEDIPDPVFAQKMMGEGFGINPTEGEVVSPIAGRVDNVFPTKHAIGLKADNGLELLVHIGLDTVQLDGEGFEVLVSSGDEVNVGDPLVRFNLEFINNNAKSVISPIIITNTDQAASINIYDENAVIKGETKVIDVTMN.

In terms of domain architecture, PTS EIIA type-1 spans 34-138 (DPVFAQKMMG…SVISPIIITN (105 aa)). Zn(2+) contacts are provided by His71 and His86. His86 functions as the Tele-phosphohistidine intermediate; for EIIA activity in the catalytic mechanism. Residue His86 is modified to Phosphohistidine; by HPr.

As to quaternary structure, heterodimer with glycerol kinase (glpk). Zn(2+) serves as cofactor.

The protein localises to the cytoplasm. Functionally, the phosphoenolpyruvate-dependent sugar phosphotransferase system (sugar PTS), a major carbohydrate active transport system, catalyzes the phosphorylation of incoming sugar substrates concomitantly with their translocation across the cell membrane. The enzyme II complex composed of PtsG and Crr is involved in glucose transport. This is PTS system glucose-specific EIIA component (crr) from Staphylococcus aureus (strain Mu50 / ATCC 700699).